The sequence spans 505 residues: Lysine--tRNA ligase (505 aa).

2 residues coordinate Mg(2+): E415 and E422.

It belongs to the class-II aminoacyl-tRNA synthetase family. As to quaternary structure, homodimer. Mg(2+) serves as cofactor.

The protein resides in the cytoplasm. The catalysed reaction is tRNA(Lys) + L-lysine + ATP = L-lysyl-tRNA(Lys) + AMP + diphosphate. The chain is Lysine--tRNA ligase from Pectobacterium atrosepticum (strain SCRI 1043 / ATCC BAA-672) (Erwinia carotovora subsp. atroseptica).